A 440-amino-acid polypeptide reads, in one-letter code: Streptokinase G (440 aa).

An N-terminal signal peptide occupies residues 1-26; it reads MKNYLSFGMFALLFALTFGTVNSVQA.

In terms of biological role, this protein is not a protease, but it activates plasminogen by complexing with it. As a potential virulence factor, it is thought to prevent the formation of effective fibrin barriers around the site of infection, thereby contributing to the invasiveness of the cells. This Streptococcus sp. (strain 19909) protein is Streptokinase G (skg).